Reading from the N-terminus, the 90-residue chain is Small ribosomal subunit protein bS20 (90 aa).

A disordered region spans residues 1–28 (MPNTSSASKRLRQNEKRRLLNRATRSNM).

It belongs to the bacterial ribosomal protein bS20 family.

Binds directly to 16S ribosomal RNA. The chain is Small ribosomal subunit protein bS20 from Rhodopirellula baltica (strain DSM 10527 / NCIMB 13988 / SH1).